The following is a 233-amino-acid chain: Large ribosomal subunit protein uL1 (233 aa).

Belongs to the universal ribosomal protein uL1 family. As to quaternary structure, part of the 50S ribosomal subunit.

Binds directly to 23S rRNA. The L1 stalk is quite mobile in the ribosome, and is involved in E site tRNA release. Its function is as follows. Protein L1 is also a translational repressor protein, it controls the translation of the L11 operon by binding to its mRNA. The polypeptide is Large ribosomal subunit protein uL1 (Brucella melitensis biotype 1 (strain ATCC 23456 / CCUG 17765 / NCTC 10094 / 16M)).